Here is a 479-residue protein sequence, read N- to C-terminus: Tegument protein VP16 homolog (479 aa).

Belongs to the herpesviridae tegument protein VP16 protein family. In terms of assembly, associates with the VP16-induced complex; binding to host HCFC1 activates VP16 for association with the octamer motif-binding host protein POU2F1, to form a multiprotein-DNA complex responsible for activating transcription of the viral immediate early genes.

It is found in the virion tegument. Its subcellular location is the host nucleus. Functionally, transcriptional activator of immediate-early (IE) gene products (alpha genes). Acts as a key activator of lytic infection by initiating the lytic program through the assembly of the transcriptional regulatory VP16-induced complex composed of VP16 and two cellular factors, HCFC1 and POU2F1. VP16-induced complex represents a regulatory switch: when it is on, it promotes IE-gene expression and thus lytic infection, and when it is off, it limits IE-gene transcription favoring latent infection. May play a role in the aggregation of tegument proteins around nucleocapsids during virus morphogenesis. This chain is Tegument protein VP16 homolog, found in Equus caballus (Horse).